A 413-amino-acid chain; its full sequence is MAP kinase-interacting serine/threonine-protein kinase 1 (413 aa).

Residues 1 to 26 (MGSSEPLPIVDSDKRRKKKRKTRATD) form a disordered region. At Thr-22 the chain carries Phosphothreonine; by PAK2. Residue Ser-27 is modified to Phosphoserine; by PAK2. Positions 37 to 321 (QLTSELLGEG…AAQVLQHPWV (285 aa)) constitute a Protein kinase domain. Residues 43–51 (LGEGAYAKV) and Lys-66 each bind ATP. Catalysis depends on Asp-158, which acts as the Proton acceptor. Phosphoserine is present on residues Ser-168 and Ser-173. Residues Thr-197, Thr-202, and Thr-332 each carry the phosphothreonine modification.

The protein belongs to the protein kinase superfamily. CAMK Ser/Thr protein kinase family. As to quaternary structure, interacts with the C-terminal regions of EIF4G1 and EIF4G2. Also binds to dephosphorylated ERK1 and ERK2, and to the p38 kinases. Mg(2+) serves as cofactor. Post-translationally, dual phosphorylation of Thr-197 and Thr-202 activates the kinase. Phosphorylation of Thr-332 activates the kinase. MAPK3/ERK1 is one of the kinases which activate MKNK1/MNK1. Phosphorylation by PAK2 leads to a reduced phosphorylation of EIF4G1.

It carries out the reaction L-seryl-[protein] + ATP = O-phospho-L-seryl-[protein] + ADP + H(+). It catalyses the reaction L-threonyl-[protein] + ATP = O-phospho-L-threonyl-[protein] + ADP + H(+). Its activity is regulated as follows. Phosphorylated and activated by the p38 kinases and kinases in the Erk pathway. Its function is as follows. May play a role in the response to environmental stress and cytokines. Appears to regulate translation by phosphorylating EIF4E, thus increasing the affinity of this protein for the 7-methylguanosine-containing mRNA cap. The polypeptide is MAP kinase-interacting serine/threonine-protein kinase 1 (Mknk1) (Rattus norvegicus (Rat)).